Here is a 230-residue protein sequence, read N- to C-terminus: Phosphoglycerate mutase-like protein 4 (230 aa).

Catalysis depends on His-21, which acts as the Tele-phosphohistidine intermediate. Catalysis depends on Glu-96, which acts as the Proton donor/acceptor.

Belongs to the phosphoglycerate mutase family.

Functionally, may play a role in carbohydrates metabolism. The chain is Phosphoglycerate mutase-like protein 4 from Arabidopsis thaliana (Mouse-ear cress).